Reading from the N-terminus, the 375-residue chain is Anhydro-N-acetylmuramic acid kinase (375 aa).

ATP is bound at residue 12–19; it reads GTSMDGVD.

This sequence belongs to the anhydro-N-acetylmuramic acid kinase family.

It catalyses the reaction 1,6-anhydro-N-acetyl-beta-muramate + ATP + H2O = N-acetyl-D-muramate 6-phosphate + ADP + H(+). It participates in amino-sugar metabolism; 1,6-anhydro-N-acetylmuramate degradation. The protein operates within cell wall biogenesis; peptidoglycan recycling. Catalyzes the specific phosphorylation of 1,6-anhydro-N-acetylmuramic acid (anhMurNAc) with the simultaneous cleavage of the 1,6-anhydro ring, generating MurNAc-6-P. Is required for the utilization of anhMurNAc either imported from the medium or derived from its own cell wall murein, and thus plays a role in cell wall recycling. The polypeptide is Anhydro-N-acetylmuramic acid kinase (Photobacterium profundum (strain SS9)).